Consider the following 280-residue polypeptide: Phosphatidylserine decarboxylase proenzyme (280 aa).

Residues Asp90, His146, and Ser247 each act as charge relay system; for autoendoproteolytic cleavage activity in the active site. Ser247 (schiff-base intermediate with substrate; via pyruvic acid; for decarboxylase activity) is an active-site residue. Position 247 is a pyruvic acid (Ser); by autocatalysis (Ser247).

It belongs to the phosphatidylserine decarboxylase family. PSD-B subfamily. Prokaryotic type I sub-subfamily. Heterodimer of a large membrane-associated beta subunit and a small pyruvoyl-containing alpha subunit. Pyruvate serves as cofactor. Post-translationally, is synthesized initially as an inactive proenzyme. Formation of the active enzyme involves a self-maturation process in which the active site pyruvoyl group is generated from an internal serine residue via an autocatalytic post-translational modification. Two non-identical subunits are generated from the proenzyme in this reaction, and the pyruvate is formed at the N-terminus of the alpha chain, which is derived from the carboxyl end of the proenzyme. The autoendoproteolytic cleavage occurs by a canonical serine protease mechanism, in which the side chain hydroxyl group of the serine supplies its oxygen atom to form the C-terminus of the beta chain, while the remainder of the serine residue undergoes an oxidative deamination to produce ammonia and the pyruvoyl prosthetic group on the alpha chain. During this reaction, the Ser that is part of the protease active site of the proenzyme becomes the pyruvoyl prosthetic group, which constitutes an essential element of the active site of the mature decarboxylase.

It is found in the cell membrane. The catalysed reaction is a 1,2-diacyl-sn-glycero-3-phospho-L-serine + H(+) = a 1,2-diacyl-sn-glycero-3-phosphoethanolamine + CO2. It participates in phospholipid metabolism; phosphatidylethanolamine biosynthesis; phosphatidylethanolamine from CDP-diacylglycerol: step 2/2. Catalyzes the formation of phosphatidylethanolamine (PtdEtn) from phosphatidylserine (PtdSer). This Myxococcus xanthus (strain DK1622) protein is Phosphatidylserine decarboxylase proenzyme.